A 169-amino-acid chain; its full sequence is E1B protein, small T-antigen (169 aa).

It belongs to the adenoviridae E1B 19 kDa protein family.

The polypeptide is E1B protein, small T-antigen (Canis lupus familiaris (Dog)).